Consider the following 506-residue polypeptide: MSLSIVHTRAALGVNAPPITVEVHISKGLPGLTMVGLPETTVKEARDRVRSAIINSGYEYPAKKITINLAPADLPKEGGRYDLPIAIALLAASEQLTANKLDEYELVGELALTGALRGVPGAISSATEAIKSGRKIIVAKDNEDEVGLINGEGCLIADHLQAVCAFLEGKHALERPKPTDAVSRALQHDLSDVIGQEQGKRGLEITAAGGHNLLLIGPPGTGKTMLASRINGLLPDLSNEEALESAAILSLVNAESVQKQWRQRPFRSPHHSASLTAMVGGGAIPGPGEISLAHNGVLFLDELPEFERRTLDALREPIESGQIHLSRTRAKITYPARFQLVAAMNPSPTGHYQGNHNRCTPEQTLRYLNRLSGPFLDRFDLSLEIPLPPPGILSKTVVPGESSATVKQRVMAARERQFKRQNKLNAWLDSPEIRQFCKLESEDAMWLEGTLIHLGLSIRAWQRLLKVARTIADIDQSDIITRQHLQEAVSYRAIDRLLIHLQKLLT.

This sequence belongs to the Mg-chelatase subunits D/I family. ComM subfamily.

This is an uncharacterized protein from Escherichia coli (strain K12).